The primary structure comprises 425 residues: Caveolae-associated protein 2 (425 aa).

A disordered region spans residues 1-42 (MGEDAAQAEKFQHPGSDMRQEKPSSPSPMPSSTPSPSLNLGN). At G2 the chain carries N-acetylglycine. The tract at residues 2–168 (GEDAAQAEKF…IFQEENEIPA (167 aa)) is interaction with CAVIN1. The segment covering 10–22 (KFQHPGSDMRQEK) has biased composition (basic and acidic residues). A phosphoserine mark is found at S27, S35, S37, and S51. 2 coiled-coil regions span residues 61-82 (LLDK…MEQR) and 125-154 (TRAV…RRNH). The tract at residues 62-100 (LDKLVNMLDAVQENQHKMEQRQISLEGSVKGIQNDLTKL) is leucine-zipper. Phosphothreonine is present on residues T196 and T199. Disordered regions lie at residues 199-234 (TVDL…IKRS) and 271-425 (IKKS…HQTS). Residues S203, S204, and S218 each carry the phosphoserine modification. Over residues 203–219 (SSDDDLPHDEEALEDSA) the composition is skewed to acidic residues. The stretch at 210 to 268 (HDEEALEDSAEEKVEESRAEKIKRSSLKKVDSLKKAFSRQNIEKKMNKLGTKIVSVERR) forms a coiled coil. Over residues 220–234 (EEKVEESRAEKIKRS) the composition is skewed to basic and acidic residues. Over residues 274–287 (SLTSNHQKISSGKS) the composition is skewed to polar residues. Residues S283, S284, S287, S288, and S293 each carry the phosphoserine modification. Basic and acidic residues predominate over residues 303-317 (REGESHAENETKSED). A phosphoserine mark is found at S332, S341, S366, and S370. T375 bears the Phosphothreonine mark. The span at 376–385 (IVEDEEEESV) shows a compositional bias: acidic residues. A Phosphotyrosine modification is found at Y395. Phosphoserine is present on S403.

This sequence belongs to the CAVIN family. In terms of assembly, component of the CAVIN complex composed of CAVIN1, CAVIN2, CAVIN3 and CAVIN4. Binds to PRKCA in the presence of phosphatidylserine. Interacts with CAVIN4; this augments the transactivation of NPPA by CAVIN4. Interacts with CAVIN1. Interacts with CAV3. Post-translationally, phosphorylated on Ser residues. Highly expressed in heart and lung, and expressed at lower levels in brain, kidney, liver, pancreas, placenta, and skeletal muscle.

It is found in the cytoplasm. Its subcellular location is the cytosol. It localises to the membrane. The protein resides in the caveola. In terms of biological role, plays an important role in caveolar biogenesis and morphology. Regulates caveolae morphology by inducing membrane curvature within caveolae. Plays a role in caveola formation in a tissue-specific manner. Required for the formation of caveolae in the lung and fat endothelia but not in the heart endothelia. Negatively regulates the size or stability of CAVIN complexes in the lung endothelial cells. May play a role in targeting PRKCA to caveolae. This chain is Caveolae-associated protein 2, found in Homo sapiens (Human).